We begin with the raw amino-acid sequence, 84 residues long: Cell division topological specificity factor (84 aa).

This sequence belongs to the MinE family.

Functionally, prevents the cell division inhibition by proteins MinC and MinD at internal division sites while permitting inhibition at polar sites. This ensures cell division at the proper site by restricting the formation of a division septum at the midpoint of the long axis of the cell. The sequence is that of Cell division topological specificity factor from Ralstonia nicotianae (strain ATCC BAA-1114 / GMI1000) (Ralstonia solanacearum).